The sequence spans 291 residues: MAAGKEIRGKIKSVENTKKITKAMEMVSVSKMRKAQERMRAARPYSEKIRNIAANLGKANPEYTHAFMKKNEAKAIGFIIVTSDKGLCGGLNTNLLRAVTGKLREAQSAGIAIESVAIGSKGLGFLNRIGARVVAHVTHLGDTPHLDKLIGPVKTLLDAYAEGKLSAVYLCYTKFINTIKQEPLVEQLLPLAADSLQVEAGQHSWDYIYEPDAQSVIDELLVRYVESLVYQAVAENMASEHSARMVAMKAATDNAGNVINELKLVYNKTRQAGITKELSEIVSGAAAAAGV.

It belongs to the ATPase gamma chain family. In terms of assembly, F-type ATPases have 2 components, CF(1) - the catalytic core - and CF(0) - the membrane proton channel. CF(1) has five subunits: alpha(3), beta(3), gamma(1), delta(1), epsilon(1). CF(0) has three main subunits: a, b and c.

The protein resides in the cell inner membrane. Its function is as follows. Produces ATP from ADP in the presence of a proton gradient across the membrane. The gamma chain is believed to be important in regulating ATPase activity and the flow of protons through the CF(0) complex. The protein is ATP synthase gamma chain of Variovorax paradoxus (strain S110).